A 539-amino-acid polypeptide reads, in one-letter code: Ell-associated factor Eaf (539 aa).

Residues 119-539 (TRSEMTHHKP…SSNSSDDDDD (421 aa)) are disordered. Residues 132 to 146 (PATNINHNNIPMSTN) show a composition bias toward polar residues. Over residues 151–163 (GPGPGPGSGPSPP) the composition is skewed to pro residues. Residues 174 to 195 (KLENSTMRISSKTKVSTGSRRN) show a composition bias toward polar residues. At Ser-205 the chain carries Phosphoserine. The segment covering 220 to 238 (RSPQSAPAWNANNAQQTLP) has biased composition (polar residues). 3 stretches are compositionally biased toward low complexity: residues 267 to 278 (SGSSTGSSTGQP), 309 to 337 (MHQNHQQHPSPPMHQQQQQQQQQQHYGRG), and 345 to 375 (NNYAQQQQPQQHHQQQEQQRPSSSSTYSHHS). Residues 420–435 (DSSDSDSGSESDDSTD) are compositionally biased toward acidic residues. Low complexity-rich tracts occupy residues 461-493 (HQQLQQQPPQQQQQQQQQQQYNHHMQQQHQPQQ) and 520-533 (NDLLQNDLQLSSNS).

This sequence belongs to the EAF family.

The protein resides in the nucleus. Its function is as follows. Promotes transcriptional elongation by Su(Tpl)/ELL. Essential for development. This is Ell-associated factor Eaf from Drosophila willistoni (Fruit fly).